Consider the following 322-residue polypeptide: Phospho-N-acetylmuramoyl-pentapeptide-transferase (322 aa).

10 helical membrane passes run 9 to 29 (IALVSSLVLTVIFLPVLINFM), 54 to 74 (TMGGTIFVIAAVISVIWVAAW), 82 to 102 (VWILVISLLGYGIIGFLDDGI), 122 to 142 (IIIAVVIVLIASSDHFQFGLY), 145 to 165 (FAGVVHSIALFTIFIIFWLVG), 176 to 196 (LDGLATGLSIVAYGTYAYIAF), 200 to 220 (NFAVLAFCMSVIGGLIAFFIF), 227 to 247 (IFMGDAGSLALGGGLATVSIM), 255 to 275 (LLIGIVFVCETASVILQVISF), and 302 to 322 (VDIVFWLVGLICSILYLAIWG).

This sequence belongs to the glycosyltransferase 4 family. MraY subfamily. Mg(2+) serves as cofactor.

The protein resides in the cell membrane. The enzyme catalyses UDP-N-acetyl-alpha-D-muramoyl-L-alanyl-gamma-D-glutamyl-L-lysyl-D-alanyl-D-alanine + di-trans,octa-cis-undecaprenyl phosphate = Mur2Ac(oyl-L-Ala-gamma-D-Glu-L-Lys-D-Ala-D-Ala)-di-trans,octa-cis-undecaprenyl diphosphate + UMP. Its pathway is cell wall biogenesis; peptidoglycan biosynthesis. Catalyzes the initial step of the lipid cycle reactions in the biosynthesis of the cell wall peptidoglycan: transfers peptidoglycan precursor phospho-MurNAc-pentapeptide from UDP-MurNAc-pentapeptide onto the lipid carrier undecaprenyl phosphate, yielding undecaprenyl-pyrophosphoryl-MurNAc-pentapeptide, known as lipid I. This is Phospho-N-acetylmuramoyl-pentapeptide-transferase from Lactobacillus acidophilus (strain ATCC 700396 / NCK56 / N2 / NCFM).